The sequence spans 380 residues: Glucose-1-phosphate adenylyltransferase (380 aa).

Alpha-D-glucose 1-phosphate contacts are provided by residues Gly-164, 179–180, and Ser-190; that span reads EK.

Belongs to the bacterial/plant glucose-1-phosphate adenylyltransferase family. In terms of assembly, homotetramer.

It catalyses the reaction alpha-D-glucose 1-phosphate + ATP + H(+) = ADP-alpha-D-glucose + diphosphate. It participates in glycan biosynthesis; glycogen biosynthesis. Involved in the biosynthesis of ADP-glucose, a building block required for the elongation reactions to produce glycogen. Catalyzes the reaction between ATP and alpha-D-glucose 1-phosphate (G1P) to produce pyrophosphate and ADP-Glc. The chain is Glucose-1-phosphate adenylyltransferase from Streptococcus sanguinis (strain SK36).